The chain runs to 668 residues: Probable tRNA (uracil-O(2)-)-methyltransferase (668 aa).

The disordered stretch occupies residues 441–460 (QHTDSLHISTKSSLDKDDPP). Residues 620–649 (LKTRLCWFYVHHPNGCPRVAKSCPYAHGAE) form a C3H1-type zinc finger.

It belongs to the TRM44 family.

It is found in the cytoplasm. It carries out the reaction uridine(44) in tRNA(Ser) + S-adenosyl-L-methionine = 2'-O-methyluridine(44) in tRNA(Ser) + S-adenosyl-L-homocysteine + H(+). Functionally, probable adenosyl-L-methionine (AdoMet)-dependent tRNA (uracil-O(2)-)-methyltransferase. In Xenopus laevis (African clawed frog), this protein is Probable tRNA (uracil-O(2)-)-methyltransferase (trmt44).